A 465-amino-acid polypeptide reads, in one-letter code: Hepatocyte nuclear factor 6 (465 aa).

2 disordered regions span residues 15–84 and 119–141; these read GVSH…GPLH and SDKFPHHHHHHHHHHHPHHHQRL. Residues 123 to 140 show a composition bias toward basic residues; sequence PHHHHHHHHHHHPHHHQR. The CUT DNA-binding region spans 283–369; sequence GSNSGQMEEI…QRMSALRLAA (87 aa). Residues 385 to 444 constitute a DNA-binding region (homeobox); it reads PKKPRLVFTDVQRRTLHAIFKENKRPSKELQITISQQLGLELSTVSNFFMNARRRSLDKW. The disordered stretch occupies residues 442-465; it reads DKWQDEGSSNSGNSSSSSSTCTKA. The segment covering 448–465 has biased composition (low complexity); that stretch reads GSSNSGNSSSSSSTCTKA.

Belongs to the CUT homeobox family. In terms of assembly, binds DNA as a monomer. Expressed in liver, brain, spleen and testis.

The protein resides in the nucleus. Transcriptional activator. Binds the consensus sequence 5'-DHWATTGAYTWWD-3' on a variety of gene promoters such as those of HNF3B and TTR. Important for liver genes transcription. The affinity of HNF-6-alpha and HNF-6-beta for DNA differs depending on the target sequence. This chain is Hepatocyte nuclear factor 6 (Onecut1), found in Rattus norvegicus (Rat).